We begin with the raw amino-acid sequence, 134 residues long: Prefoldin subunit alpha (134 aa).

It belongs to the prefoldin subunit alpha family. In terms of assembly, heterohexamer of two alpha and four beta subunits.

It localises to the cytoplasm. Functionally, molecular chaperone capable of stabilizing a range of proteins. Seems to fulfill an ATP-independent, HSP70-like function in archaeal de novo protein folding. In Pyrobaculum calidifontis (strain DSM 21063 / JCM 11548 / VA1), this protein is Prefoldin subunit alpha.